The primary structure comprises 226 residues: Phosphoribosylformylglycinamidine synthase subunit PurQ (226 aa).

One can recognise a Glutamine amidotransferase type-1 domain in the interval 2-225; that stretch reads RFGIVVFPGS…MHYLEGGKNN (224 aa). The active-site Nucleophile is C86. Active-site residues include H194 and E196.

In terms of assembly, part of the FGAM synthase complex composed of 1 PurL, 1 PurQ and 2 PurS subunits.

Its subcellular location is the cytoplasm. The catalysed reaction is N(2)-formyl-N(1)-(5-phospho-beta-D-ribosyl)glycinamide + L-glutamine + ATP + H2O = 2-formamido-N(1)-(5-O-phospho-beta-D-ribosyl)acetamidine + L-glutamate + ADP + phosphate + H(+). It catalyses the reaction L-glutamine + H2O = L-glutamate + NH4(+). The protein operates within purine metabolism; IMP biosynthesis via de novo pathway; 5-amino-1-(5-phospho-D-ribosyl)imidazole from N(2)-formyl-N(1)-(5-phospho-D-ribosyl)glycinamide: step 1/2. Functionally, part of the phosphoribosylformylglycinamidine synthase complex involved in the purines biosynthetic pathway. Catalyzes the ATP-dependent conversion of formylglycinamide ribonucleotide (FGAR) and glutamine to yield formylglycinamidine ribonucleotide (FGAM) and glutamate. The FGAM synthase complex is composed of three subunits. PurQ produces an ammonia molecule by converting glutamine to glutamate. PurL transfers the ammonia molecule to FGAR to form FGAM in an ATP-dependent manner. PurS interacts with PurQ and PurL and is thought to assist in the transfer of the ammonia molecule from PurQ to PurL. The protein is Phosphoribosylformylglycinamidine synthase subunit PurQ of Alkaliphilus metalliredigens (strain QYMF).